We begin with the raw amino-acid sequence, 336 residues long: tRNA(Ile)-lysidine synthase (336 aa).

ATP is bound at residue 21–26; it reads SGGLDS.

It belongs to the tRNA(Ile)-lysidine synthase family.

Its subcellular location is the cytoplasm. It catalyses the reaction cytidine(34) in tRNA(Ile2) + L-lysine + ATP = lysidine(34) in tRNA(Ile2) + AMP + diphosphate + H(+). Ligates lysine onto the cytidine present at position 34 of the AUA codon-specific tRNA(Ile) that contains the anticodon CAU, in an ATP-dependent manner. Cytidine is converted to lysidine, thus changing the amino acid specificity of the tRNA from methionine to isoleucine. In Helicobacter pylori (strain ATCC 700392 / 26695) (Campylobacter pylori), this protein is tRNA(Ile)-lysidine synthase.